The chain runs to 337 residues: DNA-directed RNA polymerase subunit alpha (337 aa).

An alpha N-terminal domain (alpha-NTD) region spans residues 1–233 (MVREKVTVST…DLFIPFLHME (233 aa)). An alpha C-terminal domain (alpha-CTD) region spans residues 264–337 (NKKIALKSIF…FVIDLAKNKF (74 aa)).

Belongs to the RNA polymerase alpha chain family. In terms of assembly, in plastids the minimal PEP RNA polymerase catalytic core is composed of four subunits: alpha, beta, beta', and beta''. When a (nuclear-encoded) sigma factor is associated with the core the holoenzyme is formed, which can initiate transcription.

The protein localises to the plastid. It is found in the chloroplast. The enzyme catalyses RNA(n) + a ribonucleoside 5'-triphosphate = RNA(n+1) + diphosphate. Functionally, DNA-dependent RNA polymerase catalyzes the transcription of DNA into RNA using the four ribonucleoside triphosphates as substrates. The chain is DNA-directed RNA polymerase subunit alpha from Atropa belladonna (Belladonna).